The primary structure comprises 403 residues: Aspartic endopeptidase PEP1 (403 aa).

The signal sequence occupies residues 1-20 (MVQISQIGAVLAVCSTLTVA). Residues 21–67 (APTKGKARFNVPQVAVPMKAVHHPAVAYARALHKFGMKVPKAVSDAA) constitute a propeptide, activation peptide. The Peptidase A1 domain occupies 82–400 (YVTQVTVGQG…DTEGPRIGFA (319 aa)). D98 is a catalytic residue. Residues N159 and N270 are each glycosylated (N-linked (GlcNAc...) asparagine). Residue D293 is part of the active site. A disulfide bridge connects residues C329 and C361.

It belongs to the peptidase A1 family.

It localises to the secreted. It carries out the reaction Hydrolysis of proteins with broad specificity. Generally favors hydrophobic residues in P1 and P1', but also accepts Lys in P1, which leads to activation of trypsinogen. Does not clot milk.. Functionally, secreted aspartic endopeptidase that allows assimilation of proteinaceous substrates. Can catalyze hydrolysis of the major structural proteins of basement membrane, elastin, collagen, and laminin. Thought to play a significant role in virulence. Can catalyze hydrolysis of the major structural proteins of basement membrane, elastin, collagen, and laminin. Thought to play a significant role in virulence. This is Aspartic endopeptidase PEP1 (PEP1) from Trichophyton verrucosum (strain HKI 0517).